The sequence spans 958 residues: Probable transport protein MmpL1 (958 aa).

12 helical membrane-spanning segments follow: residues 19-39, 192-212, 216-236, 252-272, 295-315, 329-349, 377-397, 762-782, 791-811, 814-834, 868-888, and 906-927; these read ALSLPIILFWVALTIVVNVVA, SLHTITGISIAVIAIMLFIAY, SAALIMLLTVGLELLAVRGII, VNVLVALTIAASTDYIIFLVG, TAHVVLASGLTVAGAMYCLGF, AIGLVTVMLASLTLAPAIIAV, WPGPVLAATLLIALIGLLALP, YDVMIAVVASLCLIFIIMLGI, VIVGTVALSLGSAFGLSVLIW, ILHMPLHWLVLPMAIIVMLAV, VVTIAGLVFAFTMGSMVASDL, and TLVVRSYMTPALATLLGRWFWW.

This sequence belongs to the resistance-nodulation-cell division (RND) (TC 2.A.6) family. MmpL subfamily.

The protein resides in the cell membrane. This Mycobacterium tuberculosis (strain CDC 1551 / Oshkosh) protein is Probable transport protein MmpL1 (mmpL1).